Consider the following 506-residue polypeptide: GTPase Der (506 aa).

EngA-type G domains follow at residues 3-166 (PVVA…GEQL) and 218-391 (IKIA…ACAT). Residues 9–16 (GRPNVGKS), 56–60 (DTGGI), 118–121 (NKTD), 224–231 (GRPNVGKS), 271–275 (DTAGV), and 336–339 (NKWD) contribute to the GTP site. A KH-like domain is found at 392–476 (QKTSTSMLTR…PIRIQFQEGN (85 aa)).

The protein belongs to the TRAFAC class TrmE-Era-EngA-EngB-Septin-like GTPase superfamily. EngA (Der) GTPase family. As to quaternary structure, associates with the 50S ribosomal subunit.

GTPase that plays an essential role in the late steps of ribosome biogenesis. In Actinobacillus pleuropneumoniae serotype 3 (strain JL03), this protein is GTPase Der.